Here is a 446-residue protein sequence, read N- to C-terminus: Adenylosuccinate synthetase (446 aa).

GTP is bound by residues 20-26 and 48-50; these read GDEGKGK and GHT. The active-site Proton acceptor is Asp-21. Positions 21 and 48 each coordinate Mg(2+). Residues 21 to 24, 46 to 49, Thr-137, Arg-151, Gln-232, Thr-247, and Arg-319 each bind IMP; these read DEGK and NAGH. His-49 serves as the catalytic Proton donor. 315-321 lines the substrate pocket; the sequence is SVTGRPR. Residues Arg-321, 347–349, and 429–431 contribute to the GTP site; these read KLD and STG.

It belongs to the adenylosuccinate synthetase family. Homodimer. The cofactor is Mg(2+).

Its subcellular location is the cytoplasm. It catalyses the reaction IMP + L-aspartate + GTP = N(6)-(1,2-dicarboxyethyl)-AMP + GDP + phosphate + 2 H(+). Its pathway is purine metabolism; AMP biosynthesis via de novo pathway; AMP from IMP: step 1/2. Its function is as follows. Plays an important role in the de novo pathway of purine nucleotide biosynthesis. Catalyzes the first committed step in the biosynthesis of AMP from IMP. This Polynucleobacter asymbioticus (strain DSM 18221 / CIP 109841 / QLW-P1DMWA-1) (Polynucleobacter necessarius subsp. asymbioticus) protein is Adenylosuccinate synthetase.